A 306-amino-acid polypeptide reads, in one-letter code: S-methyl-5'-thioadenosine phosphorylase (306 aa).

Phosphate-binding positions include T21, 63–64, and 96–97; these read RH and SA. M198 is a binding site for substrate. Phosphate is bound at residue S199. 222–224 provides a ligand contact to substrate; sequence DYD.

The protein belongs to the PNP/MTAP phosphorylase family. MTAP subfamily. Homotrimer.

It localises to the cytoplasm. The protein localises to the nucleus. It catalyses the reaction S-methyl-5'-thioadenosine + phosphate = 5-(methylsulfanyl)-alpha-D-ribose 1-phosphate + adenine. It participates in amino-acid biosynthesis; L-methionine biosynthesis via salvage pathway; S-methyl-5-thio-alpha-D-ribose 1-phosphate from S-methyl-5'-thioadenosine (phosphorylase route): step 1/1. Functionally, catalyzes the reversible phosphorylation of S-methyl-5'-thioadenosine (MTA) to adenine and 5-methylthioribose-1-phosphate. Involved in the breakdown of MTA, a major by-product of polyamine biosynthesis. Responsible for the first step in the methionine salvage pathway after MTA has been generated from S-adenosylmethionine. Has broad substrate specificity with 6-aminopurine nucleosides as preferred substrates. This is S-methyl-5'-thioadenosine phosphorylase from Sclerotinia sclerotiorum (strain ATCC 18683 / 1980 / Ss-1) (White mold).